The following is an 80-amino-acid chain: CDC42 small effector protein 1 (80 aa).

2 S-palmitoyl cysteine lipidation sites follow: Cys10 and Cys11. The CRIB domain occupies 30 to 43; that stretch reads IGEPMNFVHLTHIG. The segment at 48–80 is disordered; sequence GAGDGLAMTGAVQEQMRSKGNHRDRPWSNSRAL.

This sequence belongs to the CDC42SE/SPEC family. As to quaternary structure, interacts with CDC42 (in GTP-bound form). Interacts weakly with RAC1 and not at all with RHOA.

The protein localises to the cytoplasm. It is found in the cytoskeleton. It localises to the cell membrane. Its function is as follows. Probably involved in the organization of the actin cytoskeleton by acting downstream of CDC42, inducing actin filament assembly. Alters CDC42-induced cell shape changes. In activated T-cells, may play a role in CDC42-mediated F-actin accumulation at the immunological synapse. May play a role in early contractile events in phagocytosis in macrophages. This Mus musculus (Mouse) protein is CDC42 small effector protein 1 (Cdc42se1).